We begin with the raw amino-acid sequence, 910 residues long: Importin subunit beta-2 (910 aa).

HEAT repeat units lie at residues 12–39 (VLVELSEVIKNSLSENSQTRNAALNLLE), 44–82 (IPDLNNYLTCILINATELSVSIRSAAGLLLKNNVRVSSL), 93–126 (YTKSTVIRGLCDPEQLIRGISGNVITTIISRWGI), 132–169 (VLPQLMEMLSSPASTTQEGAFSALTKICEDSAQELDRD), 177–207 (DFMIPRFIELARHENPKIRTDALFCLNQFVL), 220–247 (FLETCYALATDVSPNVRKNVCQALVYLL), 259–286 (GSIVEYMLYSTQDSDQNVALEACEFWLA), 302–406 (DKIV…LSSF), 414–442 (IILPHLKQSLTSEDWKVQEAGVLAVGAIA), 454–481 (PELYPYFLSLLDSKKPLVRTITCWTLGR), 499–532 (FVPLLQGLLRMVVDNNKKVQEAGCSAFAILEEQA), 540–573 (LEPILTNLAFAFQKYQRKNVLILYDAVQTLADYV), 581–619 (RYIELLITPLLQKWSMIPDDDPNLFPLFECLSSVAVALR), 627–677 (AETY…ALGS), 690–721 (LGQIIGICAKDEVPEVRQSAYALLGDMCMYCF), 729–764 (DALLVDMLPQMQLPLLHVSASNNAIWSAGEMALQLG), 772–807 (KPLLERLICILKSKKSNTTVLENVAITIGRLGVYNP), 815–848 (ELFYQPWFEIIKTVGENEEKDSAFRGFCNILACN), and 857–888 (PMFVLCVAEYENPSAELRDMFQKILQGSVELF). The region spanning 34 to 122 (ALNLLEKAKD…SGNVITTIIS (89 aa)) is the Importin N-terminal domain. The tract at residues 333 to 381 (DREEDIRPQHAKGKSRITLNTQGPITQQGSSNADADELEDEDEDDDEFD) is disordered. Polar residues predominate over residues 349-364 (ITLNTQGPITQQGSSN). Residues 366–381 (DADELEDEDEDDDEFD) are compositionally biased toward acidic residues.

This sequence belongs to the importin beta family. Importin beta-2 subfamily. In terms of assembly, interacts with Ran; interacts specifically with the GTP-bound form of Ran (GTP-Ran), protecting it from GTP hydrolysis and nucleotide exchange. Interacts with nucleoporins.

The protein resides in the cytoplasm. It localises to the nucleus envelope. In terms of biological role, functions in nuclear protein import as nuclear transport receptor. Serves as receptor for arginine/glycine-rich nuclear localization signals (rg-NLS) and PY-NLS in cargo substrates. Its predominant cargo substrate seems to be mRNA-binding proteins. Mediates docking of the importin/substrate complex to the nuclear pore complex (NPC) through binding to repeat-containing nucleoporins. The complex is subsequently translocated through the pore by an energy requiring, Ran-dependent mechanism. At the nucleoplasmic side of the NPC, GTP-Ran binding leads to release of the cargo. The importin is re-exported from the nucleus to the cytoplasm where GTP hydrolysis releases Ran from importin. The directionality of nuclear import is thought to be conferred by an asymmetric distribution of the GTP- and GDP-bound forms of Ran between the cytoplasm and nucleus. In Schizosaccharomyces pombe (strain 972 / ATCC 24843) (Fission yeast), this protein is Importin subunit beta-2.